The following is a 306-amino-acid chain: Serine/threonine-protein phosphatase PP2A-1 catalytic subunit (306 aa).

Mn(2+) contacts are provided by Asp-54, His-56, Asp-82, and Asn-114. His-115 acts as the Proton donor in catalysis. 2 residues coordinate Mn(2+): His-164 and His-238.

It belongs to the PPP phosphatase family. PP-2A subfamily. The cofactor is Mn(2+).

Its subcellular location is the cytoplasm. The enzyme catalyses O-phospho-L-seryl-[protein] + H2O = L-seryl-[protein] + phosphate. It carries out the reaction O-phospho-L-threonyl-[protein] + H2O = L-threonyl-[protein] + phosphate. This Oryza sativa subsp. indica (Rice) protein is Serine/threonine-protein phosphatase PP2A-1 catalytic subunit (PP2A1).